A 738-amino-acid chain; its full sequence is 1,4-alpha-glucan branching enzyme GlgB (738 aa).

The Nucleophile role is filled by aspartate 399. Glutamate 452 (proton donor) is an active-site residue.

The protein belongs to the glycosyl hydrolase 13 family. GlgB subfamily. Monomer.

It catalyses the reaction Transfers a segment of a (1-&gt;4)-alpha-D-glucan chain to a primary hydroxy group in a similar glucan chain.. It functions in the pathway glycan biosynthesis; glycogen biosynthesis. Its function is as follows. Catalyzes the formation of the alpha-1,6-glucosidic linkages in glycogen by scission of a 1,4-alpha-linked oligosaccharide from growing alpha-1,4-glucan chains and the subsequent attachment of the oligosaccharide to the alpha-1,6 position. The polypeptide is 1,4-alpha-glucan branching enzyme GlgB (Chlamydia trachomatis serovar D (strain ATCC VR-885 / DSM 19411 / UW-3/Cx)).